The chain runs to 582 residues: UPF0329 protein ECU07_0070 (582 aa).

The disordered stretch occupies residues 326-386 (EEKAKSKKKG…KTGKKSKGDQ (61 aa)). The segment covering 330-339 (KSKKKGKKKS) has biased composition (basic residues). Residues 344 to 354 (EAKEEEKKESG) are compositionally biased toward basic and acidic residues.

This sequence belongs to the UPF0329 family.

This Encephalitozoon cuniculi (strain GB-M1) (Microsporidian parasite) protein is UPF0329 protein ECU07_0070.